The sequence spans 86 residues: MKEGIHPNYREVVFQDMSNGFKFITRSTIQTRENIELDGKTYPLAKIEVSSESHSFYTGQQKIMDTAGRVEKFKNKFGVRASGKAK.

The protein belongs to the bacterial ribosomal protein bL31 family. Type B subfamily. Part of the 50S ribosomal subunit.

The chain is Large ribosomal subunit protein bL31B from Burkholderia lata (strain ATCC 17760 / DSM 23089 / LMG 22485 / NCIMB 9086 / R18194 / 383).